The following is a 219-amino-acid chain: Charged multivesicular body protein 5 (219 aa).

A coiled-coil region spans residues 22-153 (TNVDGRAESI…EIQEALSRSY (132 aa)).

It belongs to the SNF7 family. As to quaternary structure, probable peripherally associated component of the endosomal sorting required for transport complex III (ESCRT-III).

The protein resides in the cytoplasm. Its subcellular location is the cytosol. It is found in the endosome membrane. Its function is as follows. Probable peripherally associated component of the endosomal sorting required for transport complex III (ESCRT-III) which is involved in multivesicular bodies (MVBs) formation and sorting of endosomal cargo proteins into MVBs. MVBs contain intraluminal vesicles (ILVs) that are generated by invagination and scission from the limiting membrane of the endosome and mostly are delivered to lysosomes enabling degradation of membrane proteins, such as stimulated growth factor receptors, lysosomal enzymes and lipids. This chain is Charged multivesicular body protein 5 (chmp5), found in Xenopus laevis (African clawed frog).